Here is a 1385-residue protein sequence, read N- to C-terminus: L-2-aminoadipate reductase large subunit (1385 aa).

The Carrier domain maps to 843 to 920 (SSFSPLEQEI…ELAKEISRVR (78 aa)). Ser880 is modified (O-(pantetheine 4'-phosphoryl)serine).

This sequence belongs to the ATP-dependent AMP-binding enzyme family. Heterodimer of an alpha and a beta subunit. Requires pantetheine 4'-phosphate as cofactor.

The catalysed reaction is (S)-2-amino-6-oxohexanoate + NADP(+) + H2O = L-2-aminoadipate + NADPH + 2 H(+). It catalyses the reaction (S)-2-amino-6-oxohexanoate + NAD(+) + H2O = L-2-aminoadipate + NADH + 2 H(+). It carries out the reaction (S)-2-amino-6-oxohexanoate + AMP + diphosphate + NADP(+) = L-2-aminoadipate + ATP + NADPH + H(+). It functions in the pathway amino-acid biosynthesis; L-lysine biosynthesis via AAA pathway; L-lysine from L-alpha-aminoadipate (fungal route): step 1/3. Functionally, catalyzes the activation of alpha-aminoadipate by ATP-dependent adenylation and the reduction of activated alpha-aminoadipate by NADPH. The activated alpha-aminoadipate is bound to the phosphopantheinyl group of the enzyme itself before it is reduced to (S)-2-amino-6-oxohexanoate. The chain is L-2-aminoadipate reductase large subunit (LYS2) from Eremothecium gossypii (strain ATCC 10895 / CBS 109.51 / FGSC 9923 / NRRL Y-1056) (Yeast).